Here is a 520-residue protein sequence, read N- to C-terminus: 2-isopropylmalate synthase (520 aa).

The Pyruvate carboxyltransferase domain maps to 12 to 274 (VIIFDTTLRD…WNKIDTTQLT (263 aa)). D21, H209, H211, and N245 together coordinate Mn(2+). Residues 398 to 520 (KLTSLTVIAG…RDTVTTAAAS (123 aa)) are regulatory domain.

This sequence belongs to the alpha-IPM synthase/homocitrate synthase family. LeuA type 1 subfamily. As to quaternary structure, homodimer. The cofactor is Mn(2+).

The protein localises to the cytoplasm. The catalysed reaction is 3-methyl-2-oxobutanoate + acetyl-CoA + H2O = (2S)-2-isopropylmalate + CoA + H(+). Its pathway is amino-acid biosynthesis; L-leucine biosynthesis; L-leucine from 3-methyl-2-oxobutanoate: step 1/4. Functionally, catalyzes the condensation of the acetyl group of acetyl-CoA with 3-methyl-2-oxobutanoate (2-ketoisovalerate) to form 3-carboxy-3-hydroxy-4-methylpentanoate (2-isopropylmalate). The polypeptide is 2-isopropylmalate synthase (Bradyrhizobium diazoefficiens (strain JCM 10833 / BCRC 13528 / IAM 13628 / NBRC 14792 / USDA 110)).